We begin with the raw amino-acid sequence, 189 residues long: MKTGKELKPGTVIRLENDPWLVQKAEFTKSGRNSAIMKTKLKNLLTGYKTEIVYSADDKLDDVILDRKEATLSFISGDTYTFMDTSDYTMYELNAEDIESVLPFVEEGMTDVCEAVFFEDRLVSVELPTTIVRQVDYTEGSARGDTSGKVMKPAKLKNGTELSVADFIEIGDMIEIDTREGGSYKGRAK.

This sequence belongs to the elongation factor P family.

The protein localises to the cytoplasm. The protein operates within protein biosynthesis; polypeptide chain elongation. In terms of biological role, involved in peptide bond synthesis. Stimulates efficient translation and peptide-bond synthesis on native or reconstituted 70S ribosomes in vitro. Probably functions indirectly by altering the affinity of the ribosome for aminoacyl-tRNA, thus increasing their reactivity as acceptors for peptidyl transferase. The protein is Elongation factor P of Pseudomonas syringae pv. syringae (strain B728a).